The primary structure comprises 154 residues: Ribosomal RNA large subunit methyltransferase H (154 aa).

S-adenosyl-L-methionine contacts are provided by residues L70, G102, and 121 to 126; that span reads LSRLTF.

This sequence belongs to the RNA methyltransferase RlmH family. As to quaternary structure, homodimer.

The protein resides in the cytoplasm. The enzyme catalyses pseudouridine(1915) in 23S rRNA + S-adenosyl-L-methionine = N(3)-methylpseudouridine(1915) in 23S rRNA + S-adenosyl-L-homocysteine + H(+). In terms of biological role, specifically methylates the pseudouridine at position 1915 (m3Psi1915) in 23S rRNA. This is Ribosomal RNA large subunit methyltransferase H from Geobacter metallireducens (strain ATCC 53774 / DSM 7210 / GS-15).